A 110-amino-acid chain; its full sequence is Parvalbumin alpha (110 aa).

Ser-2 carries the post-translational modification N-acetylserine. Phosphoserine occurs at positions 2, 8, and 24. 2 EF-hand domains span residues 39-74 (KNPD…FSSD) and 78-110 (LSAK…VAES). Residues Asp-52, Asp-54, Ser-56, Phe-58, Glu-60, Glu-63, Asp-91, Asp-93, Asp-95, Lys-97, and Glu-102 each contribute to the Ca(2+) site.

As to expression, expressed in the modiolar nerve root (at protein level).

Functionally, in muscle, parvalbumin is thought to be involved in relaxation after contraction. It binds two calcium ions. This Mus musculus (Mouse) protein is Parvalbumin alpha (Pvalb).